The sequence spans 122 residues: MIQMQTNLDVADNSGARRVMCIKVLGGSKRKYASVGDIIVVSIKEAIPRGRVKKGDVMKAVVVRTAKDIRRPDGSVIRFDKNAAVLVDNKKEPIGTRIFGPVPRELRAKNHMKIISLAPEVL.

It belongs to the universal ribosomal protein uL14 family. Part of the 50S ribosomal subunit. Forms a cluster with proteins L3 and L19. In the 70S ribosome, L14 and L19 interact and together make contacts with the 16S rRNA in bridges B5 and B8.

In terms of biological role, binds to 23S rRNA. Forms part of two intersubunit bridges in the 70S ribosome. The polypeptide is Large ribosomal subunit protein uL14 (Mesorhizobium japonicum (strain LMG 29417 / CECT 9101 / MAFF 303099) (Mesorhizobium loti (strain MAFF 303099))).